A 252-amino-acid polypeptide reads, in one-letter code: Phosphate import ATP-binding protein PstB (252 aa).

The ABC transporter domain occupies 6 to 247 (IDTRDVNFWY…PEKEATQNYI (242 aa)). 38-45 (GPSGCGKS) is an ATP binding site.

This sequence belongs to the ABC transporter superfamily. Phosphate importer (TC 3.A.1.7) family. As to quaternary structure, the complex is composed of two ATP-binding proteins (PstB), two transmembrane proteins (PstC and PstA) and a solute-binding protein (PstS).

Its subcellular location is the cell inner membrane. The enzyme catalyses phosphate(out) + ATP + H2O = ADP + 2 phosphate(in) + H(+). Part of the ABC transporter complex PstSACB involved in phosphate import. Responsible for energy coupling to the transport system. The chain is Phosphate import ATP-binding protein PstB from Bacteroides thetaiotaomicron (strain ATCC 29148 / DSM 2079 / JCM 5827 / CCUG 10774 / NCTC 10582 / VPI-5482 / E50).